A 288-amino-acid chain; its full sequence is MAAKIIDGKTIAQQVRSEVAQKVQARIAAGLRAPGLAVVLVGSNPASQIYVASKRKACEEVGFVSRSYDLPETTSEAELLELIDTLNADNTIDGILVQLPLPAGIDNVKVLERIHPDKDVDGFHPYNVGRLCQRAPRLRPCTPRGIVTLLERYNIDTFGLNAVVIGASNIVGRPMSMELLLAGCTTTVTHRFTKNLRHHVENADLLIVAVGKPGFIPGDWIKEGAIVIDVGINRLENGKVVGDVVFEDAAKRASYITPVPGGVGPMTVATLIENTLQACVEYHDPQDE.

NADP(+) contacts are provided by residues 166–168 (GAS) and I232.

Belongs to the tetrahydrofolate dehydrogenase/cyclohydrolase family. Homodimer.

It carries out the reaction (6R)-5,10-methylene-5,6,7,8-tetrahydrofolate + NADP(+) = (6R)-5,10-methenyltetrahydrofolate + NADPH. It catalyses the reaction (6R)-5,10-methenyltetrahydrofolate + H2O = (6R)-10-formyltetrahydrofolate + H(+). Its pathway is one-carbon metabolism; tetrahydrofolate interconversion. In terms of biological role, catalyzes the oxidation of 5,10-methylenetetrahydrofolate to 5,10-methenyltetrahydrofolate and then the hydrolysis of 5,10-methenyltetrahydrofolate to 10-formyltetrahydrofolate. This is Bifunctional protein FolD from Escherichia coli O8 (strain IAI1).